Reading from the N-terminus, the 147-residue chain is Catabolic 3-dehydroquinase 2 (147 aa).

Catalysis depends on Tyr23, which acts as the Proton acceptor. Substrate-binding residues include Asn74, His80, and Asp87. The Proton donor role is filled by His100. Substrate contacts are provided by residues 101 to 102 (IT) and Arg111.

It belongs to the type-II 3-dehydroquinase family. Homododecamer. Adopts a ring-like structure, composed of an arrangement of two hexameric rings stacked on top of one another.

The catalysed reaction is 3-dehydroquinate = 3-dehydroshikimate + H2O. It functions in the pathway aromatic compound metabolism; 3,4-dihydroxybenzoate biosynthesis; 3,4-dihydroxybenzoate from 3-dehydroquinate: step 1/2. Its function is as follows. Is involved in the catabolism of quinate. Allows the utilization of quinate as carbon source via the beta-ketoadipate pathway. This chain is Catabolic 3-dehydroquinase 2, found in Aspergillus terreus (strain NIH 2624 / FGSC A1156).